Reading from the N-terminus, the 578-residue chain is CTP synthase (578 aa).

The Glutamine amidotransferase type-1 domain maps to 305-559 (KIALVGKYTN…LGLVAASSGI (255 aa)). Catalysis depends on for GATase activity residues Cys-404, His-535, and Glu-537.

This sequence belongs to the CTP synthase family.

It carries out the reaction UTP + L-glutamine + ATP + H2O = CTP + L-glutamate + ADP + phosphate + 2 H(+). It functions in the pathway pyrimidine metabolism; CTP biosynthesis via de novo pathway; CTP from UDP: step 2/2. Functionally, catalyzes the ATP-dependent amination of UTP to CTP with either L-glutamine or ammonia as the source of nitrogen. This Candida glabrata (strain ATCC 2001 / BCRC 20586 / JCM 3761 / NBRC 0622 / NRRL Y-65 / CBS 138) (Yeast) protein is CTP synthase (URA7).